The chain runs to 308 residues: Protease HtpX homolog (308 aa).

2 consecutive transmembrane segments (helical) span residues 16 to 36 (LLSLLVGLGIAALASLIIYAV) and 39 to 59 (YLFGIYSIGIIFGVFVLVLMM). A Zn(2+)-binding site is contributed by histidine 149. The active site involves glutamate 150. Histidine 153 is a binding site for Zn(2+). The next 2 membrane-spanning stretches (helical) occupy residues 161–181 (VIMAIGLIPTLIFYFAYTTLF) and 192–212 (IILALVLMVVSFLFNIMVLSV). Position 217 (glutamate 217) interacts with Zn(2+).

The protein belongs to the peptidase M48B family. Requires Zn(2+) as cofactor.

Its subcellular location is the cell membrane. In Thermoplasma volcanium (strain ATCC 51530 / DSM 4299 / JCM 9571 / NBRC 15438 / GSS1), this protein is Protease HtpX homolog.